We begin with the raw amino-acid sequence, 268 residues long: Norsolorinic acid ketoreductase nor1 (268 aa).

Residues Ile32, Asp79, Asn108, Tyr182, Lys186, Val213, and Thr215 each contribute to the NADP(+) site. The active-site Proton donor is the Tyr182. Catalysis depends on Lys186, which acts as the Lowers pKa of active site Tyr.

This sequence belongs to the short-chain dehydrogenases/reductases (SDR) family.

The protein localises to the cytoplasm. The protein resides in the cytosol. It is found in the vacuole. The catalysed reaction is (1'S)-averantin + NADP(+) = norsolorinic acid + NADPH + H(+). The protein operates within mycotoxin biosynthesis. In terms of biological role, norsolorinic acid ketoreductase; part of the fragmented gene cluster that mediates the biosynthesis of dothistromin (DOTH), a polyketide toxin very similar in structure to the aflatoxin precursor, versicolorin B. The first step of the pathway is the conversion of acetate to norsolorinic acid (NOR) and requires the fatty acid synthase subunits hexA and hexB, as well as the polyketide synthase pksA. PksA combines a hexanoyl starter unit and 7 malonyl-CoA extender units to synthesize the precursor NOR. The hexanoyl starter unit is provided to the acyl-carrier protein (ACP) domain by the fungal fatty acid synthase hexA/hexB. The second step is the conversion of NOR to averantin (AVN) and requires the norsolorinic acid ketoreductase nor1, which catalyzes the dehydration of norsolorinic acid to form (1'S)-averantin. The cytochrome P450 monooxygenase avnA then catalyzes the hydroxylation of AVN to 5'hydroxyaverantin (HAVN). The next step is performed by adhA that transforms HAVN to averufin (AVF). Averufin might then be converted to hydroxyversicolorone by cypX and avfA. Hydroxyversicolorone is further converted versiconal hemiacetal acetate (VHA) by moxY. VHA is then the substrate for the versiconal hemiacetal acetate esterase est1 to yield versiconal (VAL). Versicolorin B synthase vbsA then converts VAL to versicolorin B (VERB) by closing the bisfuran ring. Then, the activity of the versicolorin B desaturase verB leads to versicolorin A (VERA). DotB, a predicted chloroperoxidase, may perform epoxidation of the A-ring of VERA. Alternatively, a cytochrome P450, such as cypX or avnA could catalyze this step. It is also possible that another, uncharacterized, cytochrome P450 enzyme is responsible for this step. Opening of the epoxide could potentially be achieved by the epoxide hydrolase epoA. However, epoA seems not to be required for DOTH biosynthesis, but other epoxide hydrolases may have the ability to complement this hydrolysis. Alternatively, opening of the epoxide ring could be achieved non-enzymatically. The next step is the deoxygenation of ring A to yield the 5,8-dihydroxyanthraquinone which is most likely catalyzed by the NADPH dehydrogenase encoded by ver1. The last stages of DOTH biosynthesis are proposed to involve hydroxylation of the bisfuran. OrdB and norB might have oxidative roles here. An alternative possibility is that cytochrome P450 monoogenases such as avnA and cypX might perform these steps in addition to previously proposed steps. In Dothistroma septosporum (strain NZE10 / CBS 128990) (Red band needle blight fungus), this protein is Norsolorinic acid ketoreductase nor1.